The sequence spans 738 residues: Propionyl-CoA carboxylase alpha chain, mitochondrial (738 aa).

The region spanning 62–509 (KFDKILIANR…TTKYLPEVYP (448 aa)) is the Biotin carboxylation domain. Residues Lys-177, 209 to 270 (SREI…PRHI), Glu-261, and Asn-296 each bind ATP. Residues 181–378 (KKIATAARVS…IVQQMLRVAY (198 aa)) form the ATP-grasp domain. The Mg(2+) site is built by Glu-336, Glu-349, and Asn-351. Positions 336, 349, and 351 each coordinate Mn(2+). The active site involves Arg-353. Phe-409 lines the biotin pocket. Positions 663–738 (KAKVDLSTVV…DEGEVLVELE (76 aa)) constitute a Biotinyl-binding domain. Position 704 is an N6-biotinyllysine (Lys-704).

In terms of assembly, the holoenzyme is a dodecamer composed of 6 alpha subunits and 6 beta subunits. Interacts with sir-2.2. Requires biotin as cofactor. The cofactor is Mg(2+). Mn(2+) serves as cofactor. The biotin cofactor is covalently attached to the C-terminal biotinyl-binding domain and is required for the catalytic activity.

The protein localises to the mitochondrion matrix. The catalysed reaction is propanoyl-CoA + hydrogencarbonate + ATP = (S)-methylmalonyl-CoA + ADP + phosphate + H(+). It catalyses the reaction butanoyl-CoA + hydrogencarbonate + ATP = (2S)-ethylmalonyl-CoA + ADP + phosphate + H(+). The protein operates within metabolic intermediate metabolism; propanoyl-CoA degradation; succinyl-CoA from propanoyl-CoA: step 1/3. Its function is as follows. This is one of the 2 subunits of the biotin-dependent propionyl-CoA carboxylase (PCC), a mitochondrial enzyme involved in the catabolism of odd chain fatty acids, branched-chain amino acids isoleucine, threonine, methionine, and valine and other metabolites. Propionyl-CoA carboxylase catalyzes the carboxylation of propionyl-CoA/propanoyl-CoA to D-methylmalonyl-CoA/(S)-methylmalonyl-CoA. Within the holoenzyme, the alpha subunit catalyzes the ATP-dependent carboxylation of the biotin carried by the biotin carboxyl carrier (BCC) domain, while the beta subunit then transfers the carboxyl group from carboxylated biotin to propionyl-CoA. Propionyl-CoA carboxylase also significantly acts on butyryl-CoA/butanoyl-CoA, which is converted to ethylmalonyl-CoA/(2S)-ethylmalonyl-CoA. Other alternative minor substrates include (2E)-butenoyl-CoA/crotonoyl-CoA. This Caenorhabditis briggsae protein is Propionyl-CoA carboxylase alpha chain, mitochondrial (pcca-1).